The following is a 354-amino-acid chain: Rhodopsin (354 aa).

Residues 1–36 lie on the Extracellular side of the membrane; the sequence is MNGTEGPNFYIPMSNKTGVVRSPFEYPQYYLAEPWQ. 2 N-linked (GlcNAc...) asparagine glycosylation sites follow: Asn-2 and Asn-15. The helical transmembrane segment at 37 to 61 threads the bilayer; that stretch reads YSILCAYMFLLILLGFPINFMTLYV. The Cytoplasmic segment spans residues 62-73; sequence TIQHKKLRTPLN. Residues 74-96 form a helical membrane-spanning segment; sequence YILLNLAFANHFMVLCGFTVTMY. Topologically, residues 97-110 are extracellular; that stretch reads SSMNGYFILGATGC. Cys-110 and Cys-187 form a disulfide bridge. Residues 111 to 133 traverse the membrane as a helical segment; that stretch reads YVEGFFATLGGEIALWSLVVLAI. The short motif at 134-136 is the 'Ionic lock' involved in activated form stabilization element; that stretch reads ERY. Over 134 to 152 the chain is Cytoplasmic; sequence ERYVVVCKPMSNFRFSENH. The chain crosses the membrane as a helical span at residues 153-173; that stretch reads AVMGVAFTWIMALSCAVPPLL. Topologically, residues 174–202 are extracellular; it reads GWSRYIPEGMQCSCGVDYYTLKPEVNNES. Residues 203–224 form a helical membrane-spanning segment; sequence FVIYMFVVHFTIPLIIIFFCYG. Residues 225-252 are Cytoplasmic-facing; the sequence is RLVCTVKEAAAQQQESATTQKAEKEVTR. A helical transmembrane segment spans residues 253–274; sequence MVIIMVVFFLICWVPYASVAFF. Over 275–286 the chain is Extracellular; that stretch reads IFSNQGSEFGPI. Residues 287 to 308 traverse the membrane as a helical segment; that stretch reads FMTVPAFFAKSSSIYNPVIYIM. Residue Lys-296 is modified to N6-(retinylidene)lysine. At 309 to 354 the chain is on the cytoplasmic side; that stretch reads LNKQFRNCMITTLCCGKNPFGEDDASSAATSKTEASSVSSSQVSPA. Residues Cys-322 and Cys-323 are each lipidated (S-palmitoyl cysteine). Residues 331 to 354 form a disordered region; the sequence is DDASSAATSKTEASSVSSSQVSPA. Over residues 334–354 the composition is skewed to low complexity; that stretch reads SSAATSKTEASSVSSSQVSPA.

It belongs to the G-protein coupled receptor 1 family. Opsin subfamily. In terms of processing, contains one covalently linked retinal chromophore. Upon light absorption, the covalently bound 11-cis-retinal is converted to all-trans-retinal. After hydrolysis of the Schiff base and release of the covalently bound all-trans-retinal, active rhodopsin is regenerated by binding of a fresh molecule of 11-cis-retinal.

Its subcellular location is the membrane. It localises to the cell projection. The protein resides in the cilium. It is found in the photoreceptor outer segment. Photoreceptor required for image-forming vision at low light intensity. Required for photoreceptor cell viability after birth. Light-induced isomerization of 11-cis to all-trans retinal triggers a conformational change that activates signaling via G-proteins. Subsequent receptor phosphorylation mediates displacement of the bound G-protein alpha subunit by arrestin and terminates signaling. This Bufo bufo (European toad) protein is Rhodopsin (RHO).